The sequence spans 120 residues: MPNLQEEIYDLIERALFLPMAITIFNRDLAGIEESTLKLKHPYKQLISESLKIAQKDLMEVRKELRKRKIAIRETERDEAFTLYTFVIDGYEENHRYFNPRIREQVSELLTYYLFAPDRL.

The stretch at 45–78 forms a coiled coil; that stretch reads QLISESLKIAQKDLMEVRKELRKRKIAIRETERD.

This is an uncharacterized protein from Bacillus subtilis (strain 168).